Consider the following 207-residue polypeptide: Proteasome subunit beta 2 (207 aa).

Residues Met1 to Gly10 constitute a propeptide, removed in mature form; by autocatalysis. The active-site Nucleophile is the Thr11.

The protein belongs to the peptidase T1B family. In terms of assembly, the 20S proteasome core is composed of 14 alpha and 14 beta subunits that assemble into four stacked heptameric rings, resulting in a barrel-shaped structure. The two inner rings, each composed of seven catalytic beta subunits, are sandwiched by two outer rings, each composed of seven alpha subunits. The catalytic chamber with the active sites is on the inside of the barrel. Has a gated structure, the ends of the cylinder being occluded by the N-termini of the alpha-subunits. Is capped at one or both ends by the proteasome regulatory ATPase, PAN.

Its subcellular location is the cytoplasm. It carries out the reaction Cleavage of peptide bonds with very broad specificity.. Its activity is regulated as follows. The formation of the proteasomal ATPase PAN-20S proteasome complex, via the docking of the C-termini of PAN into the intersubunit pockets in the alpha-rings, triggers opening of the gate for substrate entry. Interconversion between the open-gate and close-gate conformations leads to a dynamic regulation of the 20S proteasome proteolysis activity. Component of the proteasome core, a large protease complex with broad specificity involved in protein degradation. The protein is Proteasome subunit beta 2 of Pyrococcus abyssi (strain GE5 / Orsay).